Here is a 655-residue protein sequence, read N- to C-terminus: Ubiquilin-3 (655 aa).

The region spanning 22–98 (IKVTVKTPKD…LVIKRQHRAM (77 aa)) is the Ubiquitin-like domain. The segment at 102 to 124 (CPAASVPTQGPSPGSLPQPSSIY) is disordered. Residues 110 to 122 (QGPSPGSLPQPSS) are compositionally biased toward low complexity. Residues 194 to 233 (NPHMQQLIQHNPEIGHILNNPEIMRQTLEFLRNPAMMQEM) form the STI1 domain. 3 disordered regions span residues 277–330 (PFAT…PDIR), 364–399 (ASAL…LPEE), and 412–447 (FLRY…LVSG). Residues 279–290 (ATATTDNATTTT) show a composition bias toward low complexity. Residues 318-330 (GRQDGDQDAPDIR) are compositionally biased toward basic and acidic residues. Positions 377–395 (VNRVPPSSPSSQEPGSGQP) are enriched in low complexity. A compositionally biased stretch (polar residues) spans 432-441 (KSSTGHSTNL). The region spanning 609–655 (QLQPEAHFQVQLEQLRSMGFLNREANLQALIATGGDVDAAVEKLRQS) is the UBA domain.

As to expression, testis specific.

The protein is Ubiquilin-3 (UBQLN3) of Homo sapiens (Human).